Consider the following 461-residue polypeptide: MTDISMRFGMQAEAREFLKLAVPLAGAQMAQAATGFVDTVMMGWLGQDVLAAGGLATMIFMAFMMTGVGLISGVSPLVAEAYGAGQTRRIGQLTRQGLWIVLLLSIPGMLFITHLNGVMHWSGQADTTIILSDSYLNVMAWGLFPAIAFATLRGCIIALSQARPIMLIVIAATLFNILGNYGLGFGKWGFPALGITGLAIASISAHWIMFLSLLVYMLWHKPLHQYSLFDSLHHLKPRILQQLLWVGGPIGIAAVLEYGLYLTASFFMGALGTPILAAHQVVSQTVLVLFMVPLAMSYAATVRVGQWFGQQHWPQIRQAALVSIGLAVLFMLTAGIALLAYPQQIIGLYLDLNDPANGEALNVGISIMKIAAFGLVLDGLQRTANGVLQGLQDTRIPMVLGTIAYWGIGLTASYLLGFYTPLSGAGVWIGTYIGLAAASIAYLWRFQKVMVRKKSLPVARS.

Helical transmembrane passes span 17–37, 51–71, 98–118, 138–158, 165–185, 198–218, 243–263, 275–295, 320–340, 360–380, 398–418, and 424–444; these read FLKLAVPLAGAQMAQAATGFV, AAGGLATMIFMAFMMTGVGLI, LWIVLLLSIPGMLFITHLNGV, VMAWGLFPAIAFATLRGCIIA, IMLIVIAATLFNILGNYGLGF, LAIASISAHWIMFLSLLVYML, LLWVGGPIGIAAVLEYGLYLT, ILAAHQVVSQTVLVLFMVPLA, ALVSIGLAVLFMLTAGIALLA, ALNVGISIMKIAAFGLVLDGL, MVLGTIAYWGIGLTASYLLGF, and GAGVWIGTYIGLAAASIAYLW.

This sequence belongs to the multi antimicrobial extrusion (MATE) (TC 2.A.66.1) family.

The protein resides in the cell inner membrane. In terms of biological role, multidrug efflux pump. The protein is Probable multidrug resistance protein NorM (norM) of Synechocystis sp. (strain ATCC 27184 / PCC 6803 / Kazusa).